A 521-amino-acid polypeptide reads, in one-letter code: MSLIVDILIDDLRALIRDLGQNGGLMSPSVYDTSQALRLYPTPSEEHVWPAVNWLISQQQSDGGWGNPSMPLSRAVPTLAAILALRRHCQRRSTFDGLLEAKRFLRRQLEYWEKPLPDNLPVGMELLLPYMLEEAYREEHQDDIDDVPIKLRLNIPLAPYRELIALGEHKRSLIQQKKPRAGTAPVYSWEAWASHADPELIDGSGGIGHSPAATAAWLFAANHNPNLRNEIAGAENYLRQASLATSESAPCIMPTAWPIPRFEQSFSLYALVTGGILDFPSIQDVLKPQIADLHQALKPRGIGFSDDFMPDGDDTAAAVAVLIAAGYPVDLAILNQFEREPYFVAYHGELQPSISLTARAVHALDLAGVDISRWWKIFIDAQKLDGSWSGDKWNTSWLYTTCHVLIALKNSPYKTAMKEAVAALQVHQHPDGGWGIINRSTTVETAYAVLALQNLREAGLLDDDDIHMLQRGYNWLCIHYRPFRMKEYQCWLNKEIYCPQRIDRAYELSAMLAVTLGELKL.

The Mg(2+) site is built by Asp311 and Asp313. The DXDD motif signature appears at 311–314; the sequence is DGDD.

The protein belongs to the terpene synthase family. Requires Mg(2+) as cofactor.

The enzyme catalyses (2E,6E,10E)-geranylgeranyl diphosphate = (+)-kolavenyl diphosphate. In terms of biological role, involved in the biosynthesis of (+)-O-methylkolavelool. Catalyzes the conversion of geranylgeranyl diphosphate into (+)-kolavenyl diphosphate. The sequence is that of (+)-kolavenyl diphosphate synthase from Herpetosiphon aurantiacus (strain ATCC 23779 / DSM 785 / 114-95).